The primary structure comprises 595 residues: UvrABC system protein C (595 aa).

The GIY-YIG domain maps to 14–91 (DSPGCYIHKD…IQENKPKYNI (78 aa)). The 36-residue stretch at 196 to 231 (DKIVNELRDKMTKASELMEFERAAEYRDLIEGIGLL) folds into the UVR domain.

It belongs to the UvrC family. As to quaternary structure, interacts with UvrB in an incision complex.

Its subcellular location is the cytoplasm. The UvrABC repair system catalyzes the recognition and processing of DNA lesions. UvrC both incises the 5' and 3' sides of the lesion. The N-terminal half is responsible for the 3' incision and the C-terminal half is responsible for the 5' incision. The polypeptide is UvrABC system protein C (Streptococcus mutans serotype c (strain ATCC 700610 / UA159)).